The sequence spans 372 residues: DNA damage-repair/toleration protein DRT100 (372 aa).

Residues 1–26 (MRKLLASPFSSLLAVVFISVISVVRC) form the signal peptide. LRR repeat units lie at residues 136 to 158 (SLRI…IGKL), 160 to 183 (KLAV…TSLI), 184 to 205 (ELKH…DFGS), 208 to 230 (MLSR…ISGM), 232 to 254 (RLAD…MGNM), 256 to 277 (VLSL…SLLS), 280 to 302 (GLDV…FGSK), 304 to 326 (YLVS…LSSA), and 328 to 350 (FVGH…FPFD).

This protein is able to complement bacterial recA mutations, but its native function in the plant is not known. The polypeptide is DNA damage-repair/toleration protein DRT100 (DRT100) (Arabidopsis thaliana (Mouse-ear cress)).